Here is an 826-residue protein sequence, read N- to C-terminus: Beta-galactosidase 7 (826 aa).

The first 25 residues, 1 to 25 (MKMKHFTRLLSLFFILITSLSLAKS), serve as a signal peptide directing secretion. Residue Asn154 is glycosylated (N-linked (GlcNAc...) asparagine). The Proton donor role is filled by Glu184. Residue Glu253 is the Nucleophile of the active site. Asn254, Asn351, Asn380, Asn491, Asn665, Asn706, Asn797, and Asn801 each carry an N-linked (GlcNAc...) asparagine glycan. Positions 740 to 826 (AHEHNKVELS…PKKLAVELEC (87 aa)) constitute an SUEL-type lectin domain.

Belongs to the glycosyl hydrolase 35 family. Expressed in flowers.

The protein resides in the secreted. It is found in the extracellular space. It localises to the apoplast. The catalysed reaction is Hydrolysis of terminal non-reducing beta-D-galactose residues in beta-D-galactosides.. This is Beta-galactosidase 7 (BGAL7) from Arabidopsis thaliana (Mouse-ear cress).